The chain runs to 297 residues: N-acetylmuramic acid 6-phosphate etherase (297 aa).

Residues 56 to 219 enclose the SIS domain; that stretch reads AIEAFNKGGR…STISMIGIGK (164 aa). Catalysis depends on glutamate 84, which acts as the Proton donor. Glutamate 115 is a catalytic residue.

The protein belongs to the GCKR-like family. MurNAc-6-P etherase subfamily. As to quaternary structure, homodimer.

The catalysed reaction is N-acetyl-D-muramate 6-phosphate + H2O = N-acetyl-D-glucosamine 6-phosphate + (R)-lactate. The protein operates within amino-sugar metabolism; N-acetylmuramate degradation. Functionally, specifically catalyzes the cleavage of the D-lactyl ether substituent of MurNAc 6-phosphate, producing GlcNAc 6-phosphate and D-lactate. This chain is N-acetylmuramic acid 6-phosphate etherase, found in Lactococcus lactis subsp. cremoris (strain SK11).